Here is a 491-residue protein sequence, read N- to C-terminus: Homeobox protein unplugged (491 aa).

Disordered stretches follow at residues 1–23 (MERPALLQNGEHGAVGSLETKTT), 46–69 (SASASIAASPPSPPEDHEQEQEQE), 124–146 (AGKEPSHPHPPPPHALDKSPLPH), and 227–329 (FSPA…RRTA). The span at 254–264 (GDSSSDISLTL) shows a compositional bias: polar residues. Gly residues predominate over residues 305-316 (GLGGKDSQGNGS). The homeobox DNA-binding region spans 323–382 (SRRRRTAFTSEQLLELEREFHAKKYLSLTERSQIATSLKLSEVQVKIWFQNRRAKWKRVK).

The protein localises to the nucleus. Plays a regulatory role in neural branching of the tracheae: segment-specific aspects of these neural branching patterns appear to be generated by homeotic regulation of expression. This chain is Homeobox protein unplugged, found in Drosophila pseudoobscura pseudoobscura (Fruit fly).